Reading from the N-terminus, the 1095-residue chain is Inactive phospholipase C-like protein 1 (1095 aa).

Basic and acidic residues predominate over residues Met-1–Pro-11. Positions Met-1 to Ser-61 are disordered. Phosphoserine occurs at positions 47 and 77. Residues Ser-83–Val-222 form an interaction with PPP1C region. The residue at position 93 (Thr-93) is a Phosphothreonine; by PKA. Phosphoserine is present on Ser-95. Residues Ser-113 to Ser-223 enclose the PH domain. The 145-residue stretch at Gln-398–Lys-542 folds into the PI-PLC X-box domain. Residues Lys-543–Arg-567 are interaction with GABA A beta subunit. Thr-556 is modified (phosphothreonine). A Phosphoserine modification is found at Ser-569. The PI-PLC Y-box domain maps to Leu-585 to Arg-701. In terms of domain architecture, C2 spans Arg-701–Ser-830. Coiled-coil stretches lie at residues Leu-894–Leu-914 and Leu-1034–Cys-1059. A disordered region spans residues Lys-1066–Leu-1095. Residues Ala-1074–Leu-1095 are compositionally biased toward basic and acidic residues. Ser-1079 is subject to Phosphoserine.

As to quaternary structure, interacts with PPP2CA. Interacts with Ins(1,4,5)P3, Ins(1,4,5,6)P4, GABARAP, GABA receptor beta subunits, GABA receptor gamma-2 subunits and PPP1C. May form a ternary complex with GABA receptor beta subunit and GABARAP. The formation of a ternary complex with GABA receptor beta subunit and GABARAP could be the key step for facilitating the association of GABARAP with the GABA receptor gamma-2 subunit and to allow it to be transported at the right destination. Phosphorylated by the catalytic subunit of PKA. Phosphorylation of Thr-93 resulted in dissociation of PPP1C from PRIP1. As to expression, expressed in a variety of fetal and adult organs including brain, lung and kidney. Its expression was greatly reduced in small and non-small cell lung carcinoma. Isoform 1 is predominantly expressed in brain.

The protein localises to the cytoplasm. Functionally, involved in an inositol phospholipid-based intracellular signaling cascade. Shows no PLC activity to phosphatidylinositol 4,5-bisphosphate and phosphatidylinositol. Component in the phospho-dependent endocytosis process of GABA A receptor. Regulates the turnover of receptors and thus contributes to the maintenance of GABA-mediated synaptic inhibition. Its aberrant expression could contribute to the genesis and progression of lung carcinoma. Acts as an inhibitor of PPP1C. The sequence is that of Inactive phospholipase C-like protein 1 (PLCL1) from Homo sapiens (Human).